A 596-amino-acid chain; its full sequence is UvrABC system protein C (596 aa).

A GIY-YIG domain is found at 16–95 (SSPGVYRFYS…IKENKPKYNV (80 aa)). The 36-residue stretch at 209 to 244 (SSVKKYYQEKMLSAAEDMQFEKAQFFKERYNSVLGL) folds into the UVR domain.

Belongs to the UvrC family. As to quaternary structure, interacts with UvrB in an incision complex.

The protein localises to the cytoplasm. Its function is as follows. The UvrABC repair system catalyzes the recognition and processing of DNA lesions. UvrC both incises the 5' and 3' sides of the lesion. The N-terminal half is responsible for the 3' incision and the C-terminal half is responsible for the 5' incision. This is UvrABC system protein C from Cytophaga hutchinsonii (strain ATCC 33406 / DSM 1761 / CIP 103989 / NBRC 15051 / NCIMB 9469 / D465).